A 300-amino-acid chain; its full sequence is Movement protein (300 aa).

This sequence belongs to the alfamovirus movement protein family.

The protein resides in the host cell junction. The protein localises to the host plasmodesma. In terms of biological role, transports viral genome to neighboring plant cells directly through plasmosdesmata, without any budding. The movement protein allows efficient cell to cell propagation, by bypassing the host cell wall barrier. Acts by forming a tubular structure at the host plasmodesmata, enlarging it enough to allow free passage of virion capsids. This chain is Movement protein, found in Alfalfa mosaic virus (AMV).